Here is a 460-residue protein sequence, read N- to C-terminus: Argininosuccinate lyase (460 aa).

The protein belongs to the lyase 1 family. Argininosuccinate lyase subfamily.

It is found in the cytoplasm. The catalysed reaction is 2-(N(omega)-L-arginino)succinate = fumarate + L-arginine. The protein operates within amino-acid biosynthesis; L-arginine biosynthesis; L-arginine from L-ornithine and carbamoyl phosphate: step 3/3. The protein is Argininosuccinate lyase of Nitratidesulfovibrio vulgaris (strain ATCC 29579 / DSM 644 / CCUG 34227 / NCIMB 8303 / VKM B-1760 / Hildenborough) (Desulfovibrio vulgaris).